Reading from the N-terminus, the 63-residue chain is MIVVPVKEGENIEKALKKFKRKFEKTGVVKELRARQQFDKPSVLNRLKRERAIYVQKLQQVEE.

Belongs to the bacterial ribosomal protein bS21 family.

The chain is Small ribosomal subunit protein bS21 from Phocaeicola vulgatus (strain ATCC 8482 / DSM 1447 / JCM 5826 / CCUG 4940 / NBRC 14291 / NCTC 11154) (Bacteroides vulgatus).